Consider the following 302-residue polypeptide: MTKTKAIDIIGAPSTFGQRKLGVDLGPTAIRYAGLISRLKQLDLDVYDKGDIKVPAVNIEKFHSEQKGLRNYDEIIDVNQKLNKEVSASIENNRFPLVLGGDHSIAVGSVSAISKHYNNLGVIWYDAHGDLNIPEESPSGNIHGMPLRILTGEGPKELLELNSNVIKPENIVLIGMRDLDKGERQFIKDHNIKTFTMSDIDKLGIKEVIENTIEYLKSRNVDGVHLSLDVDALDPLETPGTGTRVLGGLSYRESHFALELLHQSHLISSMDLVEVNPLIDSNNHTAEQAVSLVGTFFGETLL.

Residues H103, D126, H128, and D130 each coordinate Mn(2+). Residues 128–132 (HGDLN), 139–141 (SGN), and D180 contribute to the substrate site. D229 and D231 together coordinate Mn(2+). Substrate contacts are provided by T243 and E274.

The protein belongs to the arginase family. It depends on Mn(2+) as a cofactor.

It carries out the reaction L-arginine + H2O = urea + L-ornithine. It functions in the pathway nitrogen metabolism; urea cycle; L-ornithine and urea from L-arginine: step 1/1. This is Arginase (arg) from Staphylococcus aureus (strain COL).